The following is a 55-amino-acid chain: U-reduvitoxin-Pr2a (55 aa).

Positions 1 to 21 (MMKFLLVLFLITITLITMAYS) are cleaved as a signal peptide. 3 disulfides stabilise this stretch: Cys26–Cys41, Cys33–Cys46, and Cys40–Cys51.

The protein belongs to the venom Ptu1-like knottin family. In terms of tissue distribution, expressed by the venom gland (posterior main gland) (at protein level).

The protein localises to the secreted. Binds reversibly and blocks P/Q-type voltage-gated calcium channels (Cav). The chain is U-reduvitoxin-Pr2a from Platymeris rhadamanthus (Red spot assassin bug).